Consider the following 347-residue polypeptide: NADH-quinone oxidoreductase subunit H (347 aa).

9 helical membrane passes run 13–33 (LIIA…VAYL), 50–70 (PNVV…KFVF), 82–102 (GVFL…WAVI), 115–135 (VGIL…IMGG), 161–181 (IGFV…TDIV), 198–218 (FLDW…ISAL), 248–268 (FLLF…LMTV), 286–306 (VPGI…FAMV), and 325–345 (VFLP…KVFG).

The protein belongs to the complex I subunit 1 family. In terms of assembly, NDH-1 is composed of 14 different subunits. Subunits NuoA, H, J, K, L, M, N constitute the membrane sector of the complex.

The protein resides in the cell inner membrane. The catalysed reaction is a quinone + NADH + 5 H(+)(in) = a quinol + NAD(+) + 4 H(+)(out). NDH-1 shuttles electrons from NADH, via FMN and iron-sulfur (Fe-S) centers, to quinones in the respiratory chain. The immediate electron acceptor for the enzyme in this species is believed to be ubiquinone. Couples the redox reaction to proton translocation (for every two electrons transferred, four hydrogen ions are translocated across the cytoplasmic membrane), and thus conserves the redox energy in a proton gradient. This subunit may bind ubiquinone. The polypeptide is NADH-quinone oxidoreductase subunit H (Brucella abortus (strain 2308)).